The chain runs to 342 residues: tRNA dimethylallyltransferase (342 aa).

39–46 serves as a coordination point for ATP; that stretch reads GPTGSGKT. Position 41–46 (41–46) interacts with substrate; the sequence is TGSGKT. Residues 64-67 are interaction with substrate tRNA; the sequence is DSMQ.

The protein belongs to the IPP transferase family. In terms of assembly, monomer. Mg(2+) is required as a cofactor.

It carries out the reaction adenosine(37) in tRNA + dimethylallyl diphosphate = N(6)-dimethylallyladenosine(37) in tRNA + diphosphate. Catalyzes the transfer of a dimethylallyl group onto the adenine at position 37 in tRNAs that read codons beginning with uridine, leading to the formation of N6-(dimethylallyl)adenosine (i(6)A). The polypeptide is tRNA dimethylallyltransferase (Chlamydia caviae (strain ATCC VR-813 / DSM 19441 / 03DC25 / GPIC) (Chlamydophila caviae)).